A 300-amino-acid polypeptide reads, in one-letter code: MKQYLITGGTGMVGSQLVNEIKKSDSHITILTRHDQISNDKKISYVNWAKSGWEHKVPQNIDVVINLAGATLNKRWTPEYKQTLMLSRIQSTQALYELFKSRNKAPKVLFNASATGYYPPDLFMSYTEVYKTLPFDFLSDIVYQWERFAQQFEQLGTRVVIGRFGMILSNEGGALQTMKLPYKYYIGGRLGSGQQWYSWIHINDLIQAILFLINNESASGPFNLTAPIPERQNLFGYTLARAMHKPHETWAPSLAMRLILGQMSTVVLDTQKVLPNKIQALGFQFKYSNLKMALEDLIKE.

The protein belongs to the NAD(P)-dependent epimerase/dehydratase family. SDR39U1 subfamily.

This Staphylococcus aureus (strain MW2) protein is Epimerase family protein MW0731.